The primary structure comprises 331 residues: Fructose-1,6-bisphosphatase class 1 (331 aa).

Positions 88, 108, 110, and 111 each coordinate Mg(2+). Substrate is bound by residues 111–114 (DGSS) and N201. E273 lines the Mg(2+) pocket.

This sequence belongs to the FBPase class 1 family. Homotetramer. Mg(2+) serves as cofactor.

Its subcellular location is the cytoplasm. The catalysed reaction is beta-D-fructose 1,6-bisphosphate + H2O = beta-D-fructose 6-phosphate + phosphate. The protein operates within carbohydrate biosynthesis; gluconeogenesis. In Methylobacillus flagellatus (strain ATCC 51484 / DSM 6875 / VKM B-1610 / KT), this protein is Fructose-1,6-bisphosphatase class 1.